Reading from the N-terminus, the 213-residue chain is MDIHVLNHPLVDHKLTVLRDKNTPSSTFRELVSELVMLEAYEATRDIEVVDKPIETPVAPMIGKHIAAPAPIIVPVLRAGLGMLDGMTKMIPSAEVGFLGMKRDEENPTQQITYANRLPEDLTGRQCFLIDPMLATGGTLVAATHYLAERGAKDITAVCILGAPEGLKFVEENLDPSIKFKLVLCAVDEKLNDKCYIVPGLGDAGDRLYGVID.

Residues arginine 78, arginine 103, and 131–139 contribute to the 5-phospho-alpha-D-ribose 1-diphosphate site; that span reads DPMLATGGT. Residues isoleucine 197 and 202-204 each bind uracil; that span reads GDA. 5-phospho-alpha-D-ribose 1-diphosphate is bound at residue aspartate 203.

Belongs to the UPRTase family. Requires Mg(2+) as cofactor.

It catalyses the reaction UMP + diphosphate = 5-phospho-alpha-D-ribose 1-diphosphate + uracil. It functions in the pathway pyrimidine metabolism; UMP biosynthesis via salvage pathway; UMP from uracil: step 1/1. With respect to regulation, allosterically activated by GTP. In terms of biological role, catalyzes the conversion of uracil and 5-phospho-alpha-D-ribose 1-diphosphate (PRPP) to UMP and diphosphate. The protein is Uracil phosphoribosyltransferase of Bifidobacterium adolescentis (strain ATCC 15703 / DSM 20083 / NCTC 11814 / E194a).